The sequence spans 122 residues: Large ribosomal subunit protein uL14 (122 aa).

The protein belongs to the universal ribosomal protein uL14 family. As to quaternary structure, part of the 50S ribosomal subunit. Forms a cluster with proteins L3 and L19. In the 70S ribosome, L14 and L19 interact and together make contacts with the 16S rRNA in bridges B5 and B8.

In terms of biological role, binds to 23S rRNA. Forms part of two intersubunit bridges in the 70S ribosome. The sequence is that of Large ribosomal subunit protein uL14 from Ligilactobacillus salivarius (strain UCC118) (Lactobacillus salivarius).